The primary structure comprises 103 residues: AAFALPAFASFEKDVITPAALEAVLNRKAPLYNIMMENDAILNVIANVKTVISNPVLEEALLKTNHGVNGIPCGESCVWIPCLTSAVGCSCKSKVCYRNSLDN.

The signal sequence occupies residues 1 to 9; sequence AAFALPAFA. The propeptide occupies 10–69; it reads SFEKDVITPAALEAVLNRKAPLYNIMMENDAILNVIANVKTVISNPVLEEALLKTNHGVN. Residues 70 to 99 constitute a cross-link (cyclopeptide (Gly-Asn)); sequence GIPCGESCVWIPCLTSAVGCSCKSKVCYRN. 3 disulfides stabilise this stretch: Cys-73/Cys-89, Cys-77/Cys-91, and Cys-82/Cys-96. Residues 100-103 constitute a propeptide that is removed on maturation; it reads SLDN.

Post-translationally, this is a cyclic peptide.

Functionally, probably participates in a plant defense mechanism. This is Cycloviolacin-O9 from Viola biflora (Yellow wood violet).